The following is a 439-amino-acid chain: COBRA-like protein 7 (439 aa).

An N-terminal signal peptide occupies residues 1 to 22; it reads MDVDQLILFVFVCCLSSRFADA. N-linked (GlcNAc...) asparagine glycosylation is found at asparagine 138, asparagine 181, asparagine 186, asparagine 232, asparagine 312, and asparagine 346. Residue asparagine 412 is the site of GPI-anchor amidated asparagine attachment. A propeptide spans 413–439 (removed in mature form); it reads GGPDSRVSAAQLIASSCLLLPFIFLIM.

The protein belongs to the COBRA family.

It is found in the cell membrane. Involved in determining the orientation of cell expansion, probably by playing an important role in cellulose deposition. May act by recruiting cellulose synthesizing complexes to discrete positions on the cell surface. The chain is COBRA-like protein 7 (BC1LP1) from Oryza sativa subsp. japonica (Rice).